The primary structure comprises 345 residues: Krueppel-like factor 3 (345 aa).

The interval 1 to 74 (MLMFDPVPVK…TVNKRSSPPS (74 aa)) is repressor domain. A Glycyl lysine isopeptide (Lys-Gly) (interchain with G-Cter in SUMO) cross-link involves residue Lys10. A 9aaTAD; inactive motif is present at residues 60–68 (EPVDLTVNK). A CTBP-binding motif motif is present at residues 61–65 (PVDLT). The segment at 66 to 112 (VNKRSSPPSAGNSPSSLKFPSSHRRASPGLSMPSSSPPIKKYSPPSP) is disordered. Lys68 participates in a covalent cross-link: Glycyl lysine isopeptide (Lys-Gly) (interchain with G-Cter in SUMO2). Composition is skewed to low complexity over residues 70-81 (SSPPSAGNSPSS) and 92-108 (SPGL…KKYS). 5 positions are modified to phosphoserine: Ser71, Ser92, Ser101, Ser108, and Ser111. Residues Lys196 and Lys198 each participate in a glycyl lysine isopeptide (Lys-Gly) (interchain with G-Cter in SUMO2) cross-link. Residues Ser216, Ser224, and Ser250 each carry the phosphoserine modification. 3 C2H2-type zinc fingers span residues 260-284 (HRCD…RRTH), 290-314 (YKCT…FRKH), and 320-342 (FQCP…RKRH).

This sequence belongs to the krueppel C2H2-type zinc-finger protein family. In terms of assembly, monomer. Post-translationally, sumoylated with SUMO1. Sumoylation is enhanced by PIAS1, PIAS2alpha and PIAS2beta, and PIAS4, but not by Pc2. Enhances transcriptional repression, but has no effect on DNA binding. Sumoylation on Lys-198 is the major site.

Its subcellular location is the nucleus. Binds to the CACCC box of erythroid cell-expressed genes. May play a role in hematopoiesis. The protein is Krueppel-like factor 3 (KLF3) of Homo sapiens (Human).